The chain runs to 1082 residues: AP-3 complex subunit beta-2 (1082 aa).

Residues 1-30 (MSAAPAYSEDKGGSAGPGEPEYGHDPASGG) are disordered. A phosphoserine mark is found at serine 272 and serine 282. Residues 666-677 (NREKRKEKEKPF) are compositionally biased toward basic and acidic residues. The disordered stretch occupies residues 666-801 (NREKRKEKEK…KTPPGSKSAP (136 aa)). The segment covering 691–700 (ADSEPESESE) has biased composition (acidic residues). The segment covering 704–715 (KSSSGSGSGESS) has biased composition (low complexity). 2 stretches are compositionally biased toward acidic residues: residues 716-726 (SESDNEEEDEE) and 775-784 (VTSESEEEQV).

The protein belongs to the adaptor complexes large subunit family. Adaptor protein complex 3 (AP-3) is a heterotetramer composed of two large adaptins (delta-type subunit AP3D1 and beta-type subunit AP3B1 or AP3B2), a medium adaptin (mu-type subunit AP3M1 or AP3M2) and a small adaptin (sigma-type subunit APS1 or AP3S2). AP-3 associates with the BLOC-1 complex.

Its subcellular location is the cytoplasmic vesicle. The protein localises to the clathrin-coated vesicle membrane. The protein resides in the golgi apparatus. Its function is as follows. Subunit of non-clathrin- and clathrin-associated adaptor protein complex 3 (AP-3) that plays a role in protein sorting in the late-Golgi/trans-Golgi network (TGN) and/or endosomes. The AP complexes mediate both the recruitment of clathrin to membranes and the recognition of sorting signals within the cytosolic tails of transmembrane cargo molecules. AP-3 appears to be involved in the sorting of a subset of transmembrane proteins targeted to lysosomes and lysosome-related organelles. In concert with the BLOC-1 complex, AP-3 is required to target cargos into vesicles assembled at cell bodies for delivery into neurites and nerve terminals. This Mus musculus (Mouse) protein is AP-3 complex subunit beta-2 (Ap3b2).